Consider the following 388-residue polypeptide: Succinate--CoA ligase [ADP-forming] subunit beta (388 aa).

The 236-residue stretch at Lys9–Leu244 folds into the ATP-grasp domain. ATP-binding positions include Lys46, Gly53–Gly55, Val102, and Glu107. Asn199 and Asp213 together coordinate Mg(2+). Substrate-binding positions include Asn264 and Gly321–Met323.

Belongs to the succinate/malate CoA ligase beta subunit family. As to quaternary structure, heterotetramer of two alpha and two beta subunits. Mg(2+) serves as cofactor.

The catalysed reaction is succinate + ATP + CoA = succinyl-CoA + ADP + phosphate. It catalyses the reaction GTP + succinate + CoA = succinyl-CoA + GDP + phosphate. Its pathway is carbohydrate metabolism; tricarboxylic acid cycle; succinate from succinyl-CoA (ligase route): step 1/1. Its function is as follows. Succinyl-CoA synthetase functions in the citric acid cycle (TCA), coupling the hydrolysis of succinyl-CoA to the synthesis of either ATP or GTP and thus represents the only step of substrate-level phosphorylation in the TCA. The beta subunit provides nucleotide specificity of the enzyme and binds the substrate succinate, while the binding sites for coenzyme A and phosphate are found in the alpha subunit. This is Succinate--CoA ligase [ADP-forming] subunit beta from Chlamydia caviae (strain ATCC VR-813 / DSM 19441 / 03DC25 / GPIC) (Chlamydophila caviae).